Consider the following 387-residue polypeptide: Succinate--CoA ligase [ADP-forming] subunit beta (387 aa).

Residues 9–236 (KELFAKHNVP…RAATDPLELK (228 aa)) form the ATP-grasp domain. Residues lysine 45, 52–54 (GRG), serine 94, and glutamate 99 each bind ATP. Mg(2+)-binding residues include asparagine 191 and aspartate 205. Residues asparagine 256 and 318 to 320 (GIT) each bind substrate.

Belongs to the succinate/malate CoA ligase beta subunit family. In terms of assembly, heterotetramer of two alpha and two beta subunits. Mg(2+) is required as a cofactor.

It catalyses the reaction succinate + ATP + CoA = succinyl-CoA + ADP + phosphate. It carries out the reaction GTP + succinate + CoA = succinyl-CoA + GDP + phosphate. It functions in the pathway carbohydrate metabolism; tricarboxylic acid cycle; succinate from succinyl-CoA (ligase route): step 1/1. Succinyl-CoA synthetase functions in the citric acid cycle (TCA), coupling the hydrolysis of succinyl-CoA to the synthesis of either ATP or GTP and thus represents the only step of substrate-level phosphorylation in the TCA. The beta subunit provides nucleotide specificity of the enzyme and binds the substrate succinate, while the binding sites for coenzyme A and phosphate are found in the alpha subunit. In Mycobacterium bovis (strain ATCC BAA-935 / AF2122/97), this protein is Succinate--CoA ligase [ADP-forming] subunit beta.